The sequence spans 635 residues: Histone-lysine N-methyltransferase Su(var)3-9 (635 aa).

The tract at residues 81–188 is binds to Su(var)205 and Suvar(3)7; it reads ERLSEKKIKN…LNGFAKLKRR (108 aa). 2 disordered regions span residues 123–161 and 191–210; these read RLCTKPASSSMPASTSSVDRRTTRRSTSQTSLSPSNSSG and SCVGAPTPNSKRSKNNMGVI. Composition is skewed to low complexity over residues 128–139 and 147–161; these read PASSSMPASTSS and RSTSQTSLSPSNSSG. A Chromo domain is found at 219–278; it reads YVVERIECVEMDQYQPVFFVKWLGYHDSENTWESLANVADCAEMEKFVERHQQLYETYIA. Residues 410–474 form the Pre-SET domain; that stretch reads VGCKCTEDTE…SCSNRLVQHG (65 aa). Zn(2+)-binding residues include C412, C414, C421, C427, C428, C456, C460, C462, and C466. One can recognise an SET domain in the interval 477–603; it reads VPLVLFKTAN…AGEELSFDYI (127 aa). Residues 488–490, Y531, and 560–561 contribute to the S-adenosyl-L-methionine site; these read SGW and NH. Residues C563, C623, C625, and C630 each contribute to the Zn(2+) site. Positions 619–635 constitute a Post-SET domain; that stretch reads VRVECRCGRDNCRKVLF.

It belongs to the class V-like SAM-binding methyltransferase superfamily. Histone-lysine methyltransferase family. Suvar3-9 subfamily. Interacts with Su(var)205 and Su(var)3-7. Probably associates with HDAC1/Rpd3. Interacts with Rrp6; the interaction promotes association of Rrp6 with a subset of genomic loci.

Its subcellular location is the nucleus. The protein resides in the chromosome. The protein localises to the centromere. It carries out the reaction L-lysyl(9)-[histone H3] + 3 S-adenosyl-L-methionine = N(6),N(6),N(6)-trimethyl-L-lysyl(9)-[histone H3] + 3 S-adenosyl-L-homocysteine + 3 H(+). In terms of biological role, histone methyltransferase that specifically trimethylates 'Lys-9' of histone H3 using monomethylated H3 'Lys-9' as substrate. H3 'Lys-9' trimethylation represents a specific tag for epigenetic transcriptional repression by recruiting Su(var)205/HP1 to methylated histones. Mainly functions in heterochromatin regions, thereby playing a central role in the establishment of constitutive heterochromatin at pericentric regions. Involved in heterochromatic gene silencing including the modification of position-effect-variegation. The chain is Histone-lysine N-methyltransferase Su(var)3-9 (Su(var)3-9) from Drosophila melanogaster (Fruit fly).